Reading from the N-terminus, the 207-residue chain is Nuclear transcription factor Y subunit beta (207 aa).

The tract at residues 1–52 is a domain; it reads MTMDGDSSTTDASQLGISADYIGGSHYVIQPHDDTEDSMNDHEDTNGSKESF. The segment at 27 to 52 is disordered; sequence YVIQPHDDTEDSMNDHEDTNGSKESF. Basic and acidic residues predominate over residues 39–52; it reads MNDHEDTNGSKESF. A b domain region spans residues 53 to 142; it reads REQDIYLPIA…PLKLYLQKFR (90 aa). A DNA-binding region spans residues 59–65; the sequence is LPIANVA. The tract at residues 86-97 is subunit association domain (SAD); it reads VQECVSEFISFI. Lys140 is covalently cross-linked (Glycyl lysine isopeptide (Lys-Gly) (interchain with G-Cter in ubiquitin)). Residues 143–207 form a c domain region; that stretch reads EAMKGEKGIG…ISGVQQIQFS (65 aa).

Belongs to the NFYB/HAP3 subunit family. As to quaternary structure, heterotrimeric transcription factor composed of three components, NF-YA, NF-YB and NF-YC. NF-YB and NF-YC must interact and dimerize for NF-YA association and DNA binding. Interacts with C1QBP. Monoubiquitination at Lys-140 plays an important role in transcriptional activation by allowing the deposition of histone H3 methylations as well as histone H2B monoubiquitination at 'Lys-121'.

The protein resides in the nucleus. Component of the sequence-specific heterotrimeric transcription factor (NF-Y) which specifically recognizes a 5'-CCAAT-3' box motif found in the promoters of its target genes. NF-Y can function as both an activator and a repressor, depending on its interacting cofactors. This chain is Nuclear transcription factor Y subunit beta (NFYB), found in Equus caballus (Horse).